A 217-amino-acid polypeptide reads, in one-letter code: MSSSIRGLYAIADTHLLPRQDLGNAVALALQGGASLIQYRDKSQEITRRYKEAESLQRICHQYQAPLIINDDALLAAEIGAEGVHLGQDDSSITSARKILGAKAIIGISCYNDLARAIAAEQAGADYVAFGRLFPSITKPEPIWASLALLREARKNLNLPIVAIGGITPENALQVIEAGASAVAVIGGLFKSRDIRAAAAAYRQHFPSWNLPKPRLF.

Residues 38 to 42 (QYRDK) and Asn70 each bind 4-amino-2-methyl-5-(diphosphooxymethyl)pyrimidine. Mg(2+)-binding residues include Asp71 and Asp90. Residue Ser109 coordinates 4-amino-2-methyl-5-(diphosphooxymethyl)pyrimidine. A 2-[(2R,5Z)-2-carboxy-4-methylthiazol-5(2H)-ylidene]ethyl phosphate-binding site is contributed by 136–138 (SIT). Lys139 lines the 4-amino-2-methyl-5-(diphosphooxymethyl)pyrimidine pocket. Position 166 (Gly166) interacts with 2-[(2R,5Z)-2-carboxy-4-methylthiazol-5(2H)-ylidene]ethyl phosphate.

The protein belongs to the thiamine-phosphate synthase family. Mg(2+) is required as a cofactor.

The enzyme catalyses 2-[(2R,5Z)-2-carboxy-4-methylthiazol-5(2H)-ylidene]ethyl phosphate + 4-amino-2-methyl-5-(diphosphooxymethyl)pyrimidine + 2 H(+) = thiamine phosphate + CO2 + diphosphate. It catalyses the reaction 2-(2-carboxy-4-methylthiazol-5-yl)ethyl phosphate + 4-amino-2-methyl-5-(diphosphooxymethyl)pyrimidine + 2 H(+) = thiamine phosphate + CO2 + diphosphate. The catalysed reaction is 4-methyl-5-(2-phosphooxyethyl)-thiazole + 4-amino-2-methyl-5-(diphosphooxymethyl)pyrimidine + H(+) = thiamine phosphate + diphosphate. Its pathway is cofactor biosynthesis; thiamine diphosphate biosynthesis; thiamine phosphate from 4-amino-2-methyl-5-diphosphomethylpyrimidine and 4-methyl-5-(2-phosphoethyl)-thiazole: step 1/1. Functionally, condenses 4-methyl-5-(beta-hydroxyethyl)thiazole monophosphate (THZ-P) and 2-methyl-4-amino-5-hydroxymethyl pyrimidine pyrophosphate (HMP-PP) to form thiamine monophosphate (TMP). This chain is Thiamine-phosphate synthase, found in Nitrosococcus oceani (strain ATCC 19707 / BCRC 17464 / JCM 30415 / NCIMB 11848 / C-107).